The chain runs to 182 residues: Peptide deformylase (182 aa).

Fe cation is bound by residues Cys110 and His153. Residue Glu154 is part of the active site. His157 is a binding site for Fe cation.

The protein belongs to the polypeptide deformylase family. Fe(2+) is required as a cofactor.

The catalysed reaction is N-terminal N-formyl-L-methionyl-[peptide] + H2O = N-terminal L-methionyl-[peptide] + formate. Removes the formyl group from the N-terminal Met of newly synthesized proteins. Requires at least a dipeptide for an efficient rate of reaction. N-terminal L-methionine is a prerequisite for activity but the enzyme has broad specificity at other positions. The protein is Peptide deformylase of Halalkalibacterium halodurans (strain ATCC BAA-125 / DSM 18197 / FERM 7344 / JCM 9153 / C-125) (Bacillus halodurans).